Consider the following 71-residue polypeptide: Large ribosomal subunit protein bL31 (71 aa).

Zn(2+) is bound by residues C16, C18, C37, and C40.

Belongs to the bacterial ribosomal protein bL31 family. Type A subfamily. In terms of assembly, part of the 50S ribosomal subunit. It depends on Zn(2+) as a cofactor.

Its function is as follows. Binds the 23S rRNA. This is Large ribosomal subunit protein bL31 from Pseudomonas putida (strain GB-1).